We begin with the raw amino-acid sequence, 436 residues long: Exodeoxyribonuclease 7 large subunit (436 aa).

The segment at 412 to 436 is disordered; the sequence is PGGVMNKNSNTTDSTDNTENGTGEA. Over residues 417–436 the composition is skewed to low complexity; that stretch reads NKNSNTTDSTDNTENGTGEA.

This sequence belongs to the XseA family. As to quaternary structure, heterooligomer composed of large and small subunits.

Its subcellular location is the cytoplasm. It catalyses the reaction Exonucleolytic cleavage in either 5'- to 3'- or 3'- to 5'-direction to yield nucleoside 5'-phosphates.. Bidirectionally degrades single-stranded DNA into large acid-insoluble oligonucleotides, which are then degraded further into small acid-soluble oligonucleotides. The chain is Exodeoxyribonuclease 7 large subunit from Corynebacterium jeikeium (strain K411).